The chain runs to 384 residues: Epoxyqueuosine reductase (384 aa).

Asp144 acts as the Proton donor in catalysis. In terms of domain architecture, 4Fe-4S ferredoxin-type spans Leu186–Thr218. Cys198, Cys201, Cys204, Cys208, Cys224, Cys251, Cys254, and Cys258 together coordinate [4Fe-4S] cluster.

It belongs to the QueG family. As to quaternary structure, monomer. The cofactor is cob(II)alamin. [4Fe-4S] cluster is required as a cofactor.

The protein resides in the cytoplasm. The catalysed reaction is epoxyqueuosine(34) in tRNA + AH2 = queuosine(34) in tRNA + A + H2O. It participates in tRNA modification; tRNA-queuosine biosynthesis. In terms of biological role, catalyzes the conversion of epoxyqueuosine (oQ) to queuosine (Q), which is a hypermodified base found in the wobble positions of tRNA(Asp), tRNA(Asn), tRNA(His) and tRNA(Tyr). This chain is Epoxyqueuosine reductase, found in Salmonella typhimurium (strain LT2 / SGSC1412 / ATCC 700720).